The primary structure comprises 302 residues: Dihydroorotate dehydrogenase B (NAD(+)), catalytic subunit (302 aa).

FMN-binding positions include serine 23 and 47–48 (KS). Substrate is bound by residues lysine 47, 71-75 (NAMGL), and asparagine 125. Asparagine 125 contributes to the FMN binding site. Cysteine 128 acts as the Nucleophile in catalysis. Positions 163 and 189 each coordinate FMN. 190 to 191 (NT) serves as a coordination point for substrate. Residues glycine 215, 241–242 (GG), and 263–264 (GT) contribute to the FMN site.

This sequence belongs to the dihydroorotate dehydrogenase family. Type 1 subfamily. As to quaternary structure, heterotetramer of 2 PyrK and 2 PyrD type B subunits. Requires FMN as cofactor.

It localises to the cytoplasm. It carries out the reaction (S)-dihydroorotate + NAD(+) = orotate + NADH + H(+). It participates in pyrimidine metabolism; UMP biosynthesis via de novo pathway; orotate from (S)-dihydroorotate (NAD(+) route): step 1/1. Functionally, catalyzes the conversion of dihydroorotate to orotate with NAD(+) as electron acceptor. The protein is Dihydroorotate dehydrogenase B (NAD(+)), catalytic subunit (pyrD) of Thermococcus kodakarensis (strain ATCC BAA-918 / JCM 12380 / KOD1) (Pyrococcus kodakaraensis (strain KOD1)).